We begin with the raw amino-acid sequence, 134 residues long: 6,7-dimethyl-8-ribityllumazine synthase (134 aa).

5-amino-6-(D-ribitylamino)uracil contacts are provided by residues phenylalanine 11, 43-45 (AYD), and 67-69 (AIV). (2S)-2-hydroxy-3-oxobutyl phosphate is bound at residue 72 to 73 (DT). The Proton donor role is filled by histidine 75. Residue phenylalanine 100 coordinates 5-amino-6-(D-ribitylamino)uracil. A (2S)-2-hydroxy-3-oxobutyl phosphate-binding site is contributed by arginine 115.

It belongs to the DMRL synthase family.

It carries out the reaction (2S)-2-hydroxy-3-oxobutyl phosphate + 5-amino-6-(D-ribitylamino)uracil = 6,7-dimethyl-8-(1-D-ribityl)lumazine + phosphate + 2 H2O + H(+). It functions in the pathway cofactor biosynthesis; riboflavin biosynthesis; riboflavin from 2-hydroxy-3-oxobutyl phosphate and 5-amino-6-(D-ribitylamino)uracil: step 1/2. Catalyzes the formation of 6,7-dimethyl-8-ribityllumazine by condensation of 5-amino-6-(D-ribitylamino)uracil with 3,4-dihydroxy-2-butanone 4-phosphate. This is the penultimate step in the biosynthesis of riboflavin. In Halorubrum lacusprofundi (strain ATCC 49239 / DSM 5036 / JCM 8891 / ACAM 34), this protein is 6,7-dimethyl-8-ribityllumazine synthase.